Consider the following 906-residue polypeptide: Inactive angiotensin-converting enzyme-related protein (906 aa).

Residues 1 to 19 form the signal peptide; it reads MKFHILLLLLVGACLPVFT. Positions 28 to 95 are disordered; that stretch reads LLPADEAPKD…SPTPEPEPAI (68 aa). The span at 67–83 shows a compositional bias: basic and acidic residues; that stretch reads PEPKPEPEPEPEPKPEP. Asn-159 carries an N-linked (GlcNAc...) asparagine glycan. One can recognise a Peptidase M2 domain in the interval 175–765; the sequence is IKDEEKLRSW…EIDQVVVGWD (591 aa). Cys-289 and Cys-297 form a disulfide bridge. N-linked (GlcNAc...) asparagine glycosylation is present at Asn-653. Residues 862-882 are disordered; that stretch reads VTTPEPSAEPEPTAKTTTKMP. Positions 863-882 are enriched in low complexity; it reads TTPEPSAEPEPTAKTTTKMP.

The protein belongs to the peptidase M2 family. Expressed in the hypodermis, in the vulva during organogenesis, and in the ray papillae of the male tail.

Inactive as a metallopeptidase, due to a lack of active site residues. Required for larval molting, male tail development, and formation of adult alae. Acts in the heterochronic pathway and plays a role in the developmental timing of postembryonic hypodermal seam cell division and adult alae production. Acts synergistically with apl-1 in let-7 regulated postembryonic cell division events. Might act downstream of the heterochronic protein lin-41. Negative regulator of lifespan, heat and oxidative stress response and age-related degenerative changes like reduced pharyngeal pumping and decreased body movements. Lifespan restriction is dependent on the forkhead-type transcription factor daf-16. The sequence is that of Inactive angiotensin-converting enzyme-related protein from Caenorhabditis elegans.